The following is a 234-amino-acid chain: Homeobox protein ceh-51 (234 aa).

2 disordered regions span residues 128–154 and 209–234; these read PPSF…RTPF and QIKQ…HVIS. Positions 147 to 206 form a DNA-binding region, homeobox; it reads RRGARTPFSDSQLYALRTRFEQCDTIKVDERRKLGAVIGLSPEQIKIWFQNRRFKLRKEK. Over residues 220 to 234 the composition is skewed to basic and acidic residues; sequence SAKEEAEEDQKHVIS.

It belongs to the NK-2 homeobox family.

It is found in the nucleus. Required for mesoderm development, including specification of muscle and coelomocyte precursors. The sequence is that of Homeobox protein ceh-51 from Caenorhabditis elegans.